A 387-amino-acid chain; its full sequence is MRPAYDDPRTTDQPITRARPPPRAARGRRLGEEPLTEHLVDPDVPRDLHAFIAGLPKAELHVHHVGSASPRIVSELAARHADSKVPTDPEALVDYFTFTDFAHFIDVYLSVVDLIRTPEDVRLLTYEVARDMARQQVRYAELTITPFSSTRRGIDEGAFMDAIEDARKAAEAEFGTVLRWCFDIPGEAGLESAEETARLATDDRLRPEGLVSFGLGGPEIGVARPQFKPYFDRAIAAGLHSVPHAGETTGPQTVWEALIDLRAERIGHGTSSAQDPKLLAHLAERRIPLEVCPTSNIATRAVRTLDEHPIKEFVRAGVPVTINSDDPPMFGTDLNNEYAVAARLLGLDERGLADLAKNGVEASFLDAPGKARIADEIDTYTAAWLAS.

Over residues 1-10 the composition is skewed to basic and acidic residues; the sequence is MRPAYDDPRT. A disordered region spans residues 1–37; it reads MRPAYDDPRTTDQPITRARPPPRAARGRRLGEEPLTE. His61 and His63 together coordinate Zn(2+). Substrate is bound by residues Arg116, Asp183, and Gly217. His244 lines the Zn(2+) pocket. Residue Glu247 is the Proton donor of the active site. Asp325 contacts Zn(2+).

It belongs to the metallo-dependent hydrolases superfamily. Adenosine and AMP deaminases family. Zn(2+) is required as a cofactor.

The enzyme catalyses 6-amino-6-deoxyfutalosine + H2O + H(+) = futalosine + NH4(+). The protein operates within quinol/quinone metabolism; menaquinone biosynthesis. Catalyzes the deamination of aminodeoxyfutalosine (AFL) into futalosine (FL), a step in the biosynthesis of menaquinone (MK, vitamin K2). This Streptomyces coelicolor (strain ATCC BAA-471 / A3(2) / M145) protein is Aminodeoxyfutalosine deaminase.